The chain runs to 371 residues: Dual-specificity RNA methyltransferase RlmN (371 aa).

Glu114 acts as the Proton acceptor in catalysis. In terms of domain architecture, Radical SAM core spans 120–352 (EEDHFTLCVS…VMTRQSKGAD (233 aa)). An intrachain disulfide couples Cys127 to Cys357. [4Fe-4S] cluster is bound by residues Cys134, Cys138, and Cys141. S-adenosyl-L-methionine-binding positions include 183–184 (GE), Ser216, 238–240 (SLN), and Asn314. Cys357 functions as the S-methylcysteine intermediate in the catalytic mechanism.

Belongs to the radical SAM superfamily. RlmN family. Requires [4Fe-4S] cluster as cofactor.

The protein localises to the cytoplasm. The catalysed reaction is adenosine(2503) in 23S rRNA + 2 reduced [2Fe-2S]-[ferredoxin] + 2 S-adenosyl-L-methionine = 2-methyladenosine(2503) in 23S rRNA + 5'-deoxyadenosine + L-methionine + 2 oxidized [2Fe-2S]-[ferredoxin] + S-adenosyl-L-homocysteine. The enzyme catalyses adenosine(37) in tRNA + 2 reduced [2Fe-2S]-[ferredoxin] + 2 S-adenosyl-L-methionine = 2-methyladenosine(37) in tRNA + 5'-deoxyadenosine + L-methionine + 2 oxidized [2Fe-2S]-[ferredoxin] + S-adenosyl-L-homocysteine. In terms of biological role, specifically methylates position 2 of adenine 2503 in 23S rRNA and position 2 of adenine 37 in tRNAs. m2A2503 modification seems to play a crucial role in the proofreading step occurring at the peptidyl transferase center and thus would serve to optimize ribosomal fidelity. The chain is Dual-specificity RNA methyltransferase RlmN from Desulfosudis oleivorans (strain DSM 6200 / JCM 39069 / Hxd3) (Desulfococcus oleovorans).